The following is a 185-amino-acid chain: Ribosome-recycling factor (185 aa).

It belongs to the RRF family.

It is found in the cytoplasm. Its function is as follows. Responsible for the release of ribosomes from messenger RNA at the termination of protein biosynthesis. May increase the efficiency of translation by recycling ribosomes from one round of translation to another. The chain is Ribosome-recycling factor from Salmonella paratyphi A (strain ATCC 9150 / SARB42).